The sequence spans 399 residues: Ribonuclease T2-like 1-A (399 aa).

The first 17 residues, 1 to 17, serve as a signal peptide directing secretion; that stretch reads MLSILSIAALLIATVQA. Cystine bridges form between C24-C43, C32-C79, C42-C150, C87-C142, and C214-C249. Catalysis depends on residues H72, E135, and H139. Residues 259–279 are disordered; it reads KGNSGANTLTTKTTGTTTSGS. Low complexity predominate over residues 262–279; the sequence is SGANTLTTKTTGTTTSGS. The N-linked (GlcNAc...) asparagine glycan is linked to N291.

This sequence belongs to the RNase T2 family.

The protein resides in the vacuole lumen. Its subcellular location is the cytoplasm. The catalysed reaction is a ribonucleotidyl-ribonucleotide-RNA + H2O = a 3'-end 3'-phospho-ribonucleotide-RNA + a 5'-end dephospho-ribonucleoside-RNA + H(+). Functionally, rnase which modulates cell survival under stress conditions. Released from the vacuole to the cytoplasm during stress to promote tRNA and rRNA cleavage and to activate separately a downstream pathway that promotes cell death. Involved in cell size, vacuolar morphology and growth at high temperatures and high salt concentration. In Candida albicans (strain SC5314 / ATCC MYA-2876) (Yeast), this protein is Ribonuclease T2-like 1-A (RNY1-A).